Consider the following 236-residue polypeptide: 2,3,4,5-tetrahydropyridine-2,6-dicarboxylate N-acetyltransferase (236 aa).

This sequence belongs to the transferase hexapeptide repeat family. DapH subfamily.

The enzyme catalyses (S)-2,3,4,5-tetrahydrodipicolinate + acetyl-CoA + H2O = L-2-acetamido-6-oxoheptanedioate + CoA. Its pathway is amino-acid biosynthesis; L-lysine biosynthesis via DAP pathway; LL-2,6-diaminopimelate from (S)-tetrahydrodipicolinate (acetylase route): step 1/3. In terms of biological role, catalyzes the transfer of an acetyl group from acetyl-CoA to tetrahydrodipicolinate. The polypeptide is 2,3,4,5-tetrahydropyridine-2,6-dicarboxylate N-acetyltransferase (Pediococcus pentosaceus (strain ATCC 25745 / CCUG 21536 / LMG 10740 / 183-1w)).